The chain runs to 153 residues: Myosin regulatory light chain (153 aa).

A Blocked amino end (Ala) modification is found at A1. 2 EF-hand domains span residues 15–50 (KQIQ…LGRT) and 81–116 (DSEE…MGNN). Residues D28, D30, D32, and D39 each coordinate Ca(2+).

In terms of biological role, in molluscan muscle, calcium regulation is associated with myosin rather than with actin. Muscle myosin contains two types of light chains: the catalytic light chain, essential for ATPase activity, and the regulatory light chain, a calcium-binding protein responsible for Ca(2+) dependent binding and Ca(2+) dependent Mg-ATPase activity. The polypeptide is Myosin regulatory light chain (Patinopecten sp. (Scallop)).